A 418-amino-acid chain; its full sequence is tRNA(Met) cytidine acetate ligase (418 aa).

ATP contacts are provided by Gly-95, Asn-161, and Arg-186.

It belongs to the TmcAL family.

Its subcellular location is the cytoplasm. It catalyses the reaction cytidine(34) in elongator tRNA(Met) + acetate + ATP = N(4)-acetylcytidine(34) in elongator tRNA(Met) + AMP + diphosphate. Functionally, catalyzes the formation of N(4)-acetylcytidine (ac(4)C) at the wobble position of elongator tRNA(Met), using acetate and ATP as substrates. First activates an acetate ion to form acetyladenylate (Ac-AMP) and then transfers the acetyl group to tRNA to form ac(4)C34. This chain is tRNA(Met) cytidine acetate ligase, found in Thermotoga maritima (strain ATCC 43589 / DSM 3109 / JCM 10099 / NBRC 100826 / MSB8).